Here is a 178-residue protein sequence, read N- to C-terminus: Interleukin-10 (178 aa).

Positions M1–A18 are cleaved as a signal peptide. 2 disulfides stabilise this stretch: C30-C126 and C80-C132. N134 carries N-linked (GlcNAc...) asparagine glycosylation.

The protein belongs to the IL-10 family. As to quaternary structure, homodimer. Interacts with IL10RA and IL10RB. Produced by a variety of cell lines, including T-cells, macrophages, mast cells and other cell types.

The protein resides in the secreted. Major immune regulatory cytokine that acts on many cells of the immune system where it has profound anti-inflammatory functions, limiting excessive tissue disruption caused by inflammation. Mechanistically, IL10 binds to its heterotetrameric receptor comprising IL10RA and IL10RB leading to JAK1 and STAT2-mediated phosphorylation of STAT3. In turn, STAT3 translocates to the nucleus where it drives expression of anti-inflammatory mediators. Targets antigen-presenting cells (APCs) such as macrophages and monocytes and inhibits their release of pro-inflammatory cytokines including granulocyte-macrophage colony-stimulating factor /GM-CSF, granulocyte colony-stimulating factor/G-CSF, IL-1 alpha, IL-1 beta, IL-6, IL-8 and TNF-alpha. Also interferes with antigen presentation by reducing the expression of MHC-class II and co-stimulatory molecules, thereby inhibiting their ability to induce T cell activation. In addition, controls the inflammatory response of macrophages by reprogramming essential metabolic pathways including mTOR signaling. This Homo sapiens (Human) protein is Interleukin-10 (IL10).